Reading from the N-terminus, the 361-residue chain is Velvet complex subunit B (361 aa).

Disordered regions lie at residues 1 to 44 (MYAI…GIPS) and 139 to 161 (SISTAMSSSYPPPPQTLSPTYAQ). Positions 10-26 (PPPPPPLSMDRIPPPSS) are enriched in pro residues. Residues 54–340 (VHEGRIWSLQ…ALQGIKIPIR (287 aa)) enclose the Velvet domain.

It belongs to the velvet family. VelB subfamily. In terms of assembly, component of the heterotrimeric velvet complex composed of laeA, veA and velB; VeA acting as a bridging protein between laeA and velB. Forms a heterodimeric complex with vosA; the formation of the velB-vosA complex is light-dependent.

Its subcellular location is the nucleus. The protein localises to the cytoplasm. In terms of biological role, component of the velvet transcription factor complex that controls sexual/asexual developmental ratio in response to light, promoting sexual development in the darkness while stimulating asexual sporulation under illumination. The velvet complex acts as a global regulator for secondary metabolite gene expression. Component of the velB-VosA heterodimeric complex that plays a dual role in activating genes associated with spore maturation and repressing certain development-associated genes. The velB-VosA complex binds DNA through the DNA-binding domain of vosA that recognizes an 11-nucleotide consensus sequence 5'-CTGGCCGCGGC-3' consisting of two motifs in the promoters of key developmental regulatory genes. Controls the expression of the aflatoxin gene cluster. Likely coordinates with fluG to modulate sclerotial production. The chain is Velvet complex subunit B from Aspergillus flavus (strain ATCC 200026 / FGSC A1120 / IAM 13836 / NRRL 3357 / JCM 12722 / SRRC 167).